The chain runs to 426 residues: Mothers against decapentaplegic homolog 7 (426 aa).

Positions 13-55 (LWRSRAPGGEDEEEGAGGGGGGGELRGEGATDSRAHGAGGGGP) are disordered. Residues 37 to 47 (LRGEGATDSRA) show a composition bias toward basic and acidic residues. N6-acetyllysine; alternate occurs at positions 64 and 70. Glycyl lysine isopeptide (Lys-Gly) (interchain with G-Cter in ubiquitin); alternate cross-links involve residues lysine 64 and lysine 70. The MH1 domain maps to 64–207 (KAVRGAKGHH…LSRLCELESP (144 aa)). The Zn(2+) site is built by cysteine 125, cysteine 180, cysteine 192, and histidine 197. Residues 208–211 (PPPY) carry the PY-motif motif. The important for interaction with SMURF2 stretch occupies residues 208 to 217 (PPPYSRYPMD). Position 249 is a phosphoserine (serine 249). The 166-residue stretch at 261–426 (WCVVAYWEEK…CWLEVIFNSR (166 aa)) folds into the MH2 domain.

The protein belongs to the dwarfin/SMAD family. As to quaternary structure, interacts with WWP1. Interacts with COPS5. Interacts with NEDD4L. Interacts with STAMBP. Interacts with RNF111, AXIN1 and AXIN2. Interacts with PPP1R15A. Interacts (via MH2 domain) with EP300. Interacts with ACVR1B, SMURF1, SMURF2 and TGFBR1; SMAD7 recruits SMURF1 and SMURF2 to the TGF-beta receptor and regulates its degradation. Interacts with PDPK1 (via PH domain). Interacts with TSC22D1/TSC-22; the interaction requires TGF-beta and the interaction is inhibited by TGFBR1. Post-translationally, phosphorylation on Ser-249 does not affect its stability, nuclear localization or inhibitory function in TGFB signaling; however it affects its ability to regulate transcription. Phosphorylated by PDPK1. In terms of processing, ubiquitinated by WWP1. Polyubiquitinated by RNF111, which is enhanced by AXIN1 and promotes proteasomal degradation. In response to TGF-beta, ubiquitinated by SMURF1; which promotes its degradation. Acetylation prevents ubiquitination and degradation mediated by SMURF1. As to expression, ubiquitous with higher expression in the lung and vascular endothelium.

The protein localises to the nucleus. It localises to the cytoplasm. Functionally, antagonist of signaling by TGF-beta (transforming growth factor) type 1 receptor superfamily members; has been shown to inhibit TGF-beta (Transforming growth factor) and activin signaling by associating with their receptors thus preventing SMAD2 access. Functions as an adapter to recruit SMURF2 to the TGF-beta receptor complex. Also acts by recruiting the PPP1R15A-PP1 complex to TGFBR1, which promotes its dephosphorylation. Positively regulates PDPK1 kinase activity by stimulating its dissociation from the 14-3-3 protein YWHAQ which acts as a negative regulator. The chain is Mothers against decapentaplegic homolog 7 (SMAD7) from Homo sapiens (Human).